The following is a 305-amino-acid chain: uncharacterized protein (305 aa).

The first 29 residues, 1–29 (MKKWFSSISKKKVSFSTLLLLGSGIVLSS), serve as a signal peptide directing secretion. The N-palmitoyl cysteine moiety is linked to residue Cys-30. Residue Cys-30 is the site of S-diacylglycerol cysteine attachment. Residues 234–265 (FYNPDNSNGSNAPGSNQPNQDSGNNGSTTPAA) are disordered. The segment covering 237–258 (PDNSNGSNAPGSNQPNQDSGNN) has biased composition (polar residues).

The protein localises to the cell membrane. This is an uncharacterized protein from Mycoplasma pneumoniae (strain ATCC 29342 / M129 / Subtype 1) (Mycoplasmoides pneumoniae).